A 968-amino-acid polypeptide reads, in one-letter code: Pumilio homolog 1 (968 aa).

Disordered stretches follow at residues 1–25 and 138–171; these read MIPELGRRPMHRGNEDSSFGDDYEK and NNVLGGVGDRRKVNDNRSLFSMPPGFEGEKTGAS. A Phosphoserine modification is found at Ser194. Disordered regions lie at residues 204–240, 260–303, and 360–382; these read GHGHPVAQQPSRPASRNTFDENVDSNNNLSPSASQGI, GTPD…VTSG, and KSDQAHKATGSLRNSQLRGPHGS. Polar residues-rich tracts occupy residues 211 to 220 and 227 to 238; these read QQPSRPASRN and DSNNNLSPSASQ. Phosphothreonine is present on Thr261. A compositionally biased stretch (polar residues) spans 291-303; the sequence is TSNQSPFNGVTSG. The PUM-HD domain maps to 610-950; it reads FGSSMLEEFK…HVVARIEKLV (341 aa). 8 Pumilio repeats span residues 630–665, 666–701, 702–737, 738–773, 774–810, 811–846, 847–882, and 883–924; these read EIAGHVVEFSSDQYGSRFIQQKLETATTDEKNMVYE, EIMPQALVLMTDVFGNYVIQKFFEHGLPPQRRELAE, KLFDHVLPLSLQMYGCRVIQKAIEVVDLDQKIKMVK, ELDGHVMRCVRDQNGNHVVQKCIECVPEENIEFIIS, TFFGHVVTLSTHPYGCRVIQRVLEHCHDPDTQSKVME, EILSTVSMLAQDQYGNYVVQHVLEHGKPDERTVIIK, ELAGKIVQMSQQKFASNVVEKCLTFGGPEERELLVN, and EMLG…LILT.

It is found in the cytoplasm. In terms of biological role, sequence-specific RNA-binding protein that regulates translation and mRNA stability by binding the 3'-UTR of target mRNAs. Binds the APUM-binding elements (APBEs) in the 3'-UTR mRNA sequence of CLV1, PNH, WUS and FAS2. This is Pumilio homolog 1 (APUM1) from Arabidopsis thaliana (Mouse-ear cress).